The following is a 459-amino-acid chain: Putative metabolite transport protein YdjK (459 aa).

Residues 1 to 25 are Cytoplasmic-facing; that stretch reads MEQITKPHCGARLDRLPDCRWHSSM. The helical transmembrane segment at 26–46 threads the bilayer; the sequence is FAIVAFGLLVCWSNAVGGLIL. Over 47–60 the chain is Periplasmic; sequence AQLKALGWTDNSTT. A helical membrane pass occupies residues 61–81; it reads ATFSAITTAGMFLGALVGGII. Topologically, residues 82–90 are cytoplasmic; the sequence is GDKTGRRNA. The chain crosses the membrane as a helical span at residues 91–111; the sequence is FILYEAIHIASMVVGAFSPNM. A topological domain (periplasmic) is located at residue Asp-112. Residues 113–133 traverse the membrane as a helical segment; sequence FLIACRFVMGVGLGALLVTLF. At 134-153 the chain is on the cytoplasmic side; it reads AGFTEYMPGRNRGTWSSRVS. Residues 154 to 174 form a helical membrane-spanning segment; that stretch reads FIGNWSYPLCSLIAMGLTPLI. The Periplasmic portion of the chain corresponds to 175 to 181; sequence SAEWNWR. Residues 182–202 form a helical membrane-spanning segment; it reads VQLLIPAILSLIATALAWRYF. At 203 to 271 the chain is on the cytoplasmic side; the sequence is PESPRWLESR…LLKRVILGSC (69 aa). Residues 272-292 form a helical membrane-spanning segment; it reads VLIAMNVVQYTLINWLPTIFM. The Periplasmic portion of the chain corresponds to 293–301; it reads TQGINLKDS. Residues 302-322 form a helical membrane-spanning segment; the sequence is IVLNTMSMFGAPFGIFIAMLV. The Cytoplasmic portion of the chain corresponds to 323–329; the sequence is MDKIPRK. The helical transmembrane segment at 330 to 350 threads the bilayer; sequence TMGVGLLILIAVLGYIYSLQT. Position 351 (Ser-351) is a topological domain, periplasmic. The chain crosses the membrane as a helical span at residues 352-372; the sequence is MLLITLIGFFLITFVYMYVCY. Topologically, residues 373–399 are cytoplasmic; the sequence is ASAVYVPEIWPTEAKLRGSGLANAVGR. Transmembrane regions (helical) follow at residues 400–420 and 421–441; these read ISGI…GVTG and VFIL…TIGI. Residues 442–459 lie on the Cytoplasmic side of the membrane; sequence ETKGVSVESLSIDAVANK.

This sequence belongs to the major facilitator superfamily. Sugar transporter (TC 2.A.1.1) family.

It localises to the cell inner membrane. The sequence is that of Putative metabolite transport protein YdjK (ydjK) from Escherichia coli (strain K12).